Here is a 199-residue protein sequence, read N- to C-terminus: Large ribosomal subunit protein bL25 (199 aa).

This sequence belongs to the bacterial ribosomal protein bL25 family. CTC subfamily. As to quaternary structure, part of the 50S ribosomal subunit; part of the 5S rRNA/L5/L18/L25 subcomplex. Contacts the 5S rRNA. Binds to the 5S rRNA independently of L5 and L18.

Functionally, this is one of the proteins that binds to the 5S RNA in the ribosome where it forms part of the central protuberance. This chain is Large ribosomal subunit protein bL25, found in Caldanaerobacter subterraneus subsp. tengcongensis (strain DSM 15242 / JCM 11007 / NBRC 100824 / MB4) (Thermoanaerobacter tengcongensis).